A 289-amino-acid polypeptide reads, in one-letter code: N-methyltransferase FrzE (289 aa).

The protein belongs to the methyltransferase superfamily.

The enzyme catalyses (1S,4S)-4-[(4-hydroxyphenyl)methyl]-2,5-diazaspiro[bicyclo[3.2.1]octane-6,1'-cyclohexan]-4'-one + S-adenosyl-L-methionine = (1S,4S)-4-[(4-hydroxyphenyl)methyl]-2-methyl-2,5-diazaspiro[bicyclo[3.2.1]octane-6,1'-cyclohexan]-4'-one + S-adenosyl-L-homocysteine + H(+). The catalysed reaction is (1S,4S)-4-[(4-methoxyphenyl)methyl]-2,5-diazaspiro[bicyclo[3.2.1]octane-6,1'-cyclohexan]-4'-one + S-adenosyl-L-methionine = (1S,4S)-4-[(4-methoxyphenyl)methyl]-2-methyl-2,5-diazaspiro[bicyclo[3.2.1]octane-6,1'-cyclohexan]-4'-one + S-adenosyl-L-homocysteine + H(+). It participates in secondary metabolite biosynthesis. Its function is as follows. N-methyltransferase; part of the gene cluster that mediates the biosynthesis of the alkaloid (-)-FR901483, a potent immunosuppressant that shows efficacy in animal models and a probable inhibitor of purine nucleotide biosynthesis by targeting phosphoribosylpyrophosphate amidotransferase (PPAT). Within the pathway, FrzE methylates the amine at position C10'. The biosynthesis of (-)-FR901483 starts with the condensation of two L-tyrosines to yield (S,S)-dityrosyl-piperazine. This process occurs in 3 steps with the non-canonical nonribosomal peptide synthetase FrzA catalyzing the reduction of L-tyrosine into L-tyrosinal, the spontaneous condensation of 2 L-tyrosinal units, and the subsequent reduction by the NmrA-like family domain-containing oxidoreductase FrzB. The cytochrome P450 monooxygenase FrzC then performs coupling between N10 and C1' to morph the piperazine into a 1,4-diazabicyclo[3.2.1]octane spiro-fused to a 2,5-cyclohexadienone. The dienone portion is further reduced to cyclohexanone by the flavin-dependent reductase FrzD. The methyltranserases (MTs) FrzE and FrzF are then involved in the methylation at the C10' amine and the C4 phenolic oxygen, respectively. The order of the two MTs appear to be interchangeable. Cleavage of the C9-N10' bond by the dioxygenase FrzG then leads to formation of a conjugated iminium. In addition to the oxidation of C9, an additional dehydrogenation between C7 and C8 can occur to give a likely shunt product. The next biosynthetic step is the intramolecular aldol condensation catalyzed by the newly identified aldolase FrzH to yield an aza-tricyclic product with the formation of a C9-C3' bond. The short-chain dehydrogenase/reductase FrzI then produces dephospho-(-)-FR901483 that is phosphorylated at C4'-OH into (-)-FR901483 by the phosphotransferase FrzJ. The polypeptide is N-methyltransferase FrzE (Cladobotryum sp).